Reading from the N-terminus, the 237-residue chain is Phosphoglycolate phosphatase (237 aa).

Asp-15 acts as the Nucleophile in catalysis. Asp-15, Asp-17, and Asp-177 together coordinate Mg(2+).

It belongs to the HAD-like hydrolase superfamily. CbbY/CbbZ/Gph/YieH family. Mg(2+) serves as cofactor.

It carries out the reaction 2-phosphoglycolate + H2O = glycolate + phosphate. Its pathway is organic acid metabolism; glycolate biosynthesis; glycolate from 2-phosphoglycolate: step 1/1. In terms of biological role, specifically catalyzes the dephosphorylation of 2-phosphoglycolate. Is involved in the dissimilation of the intracellular 2-phosphoglycolate formed during the DNA repair of 3'-phosphoglycolate ends, a major class of DNA lesions induced by oxidative stress. The protein is Phosphoglycolate phosphatase of Caulobacter vibrioides (strain ATCC 19089 / CIP 103742 / CB 15) (Caulobacter crescentus).